Consider the following 1426-residue polypeptide: MSGKPAARQGDMTQYGGPIVQGSAGVRIGAPTGVACSVCPGGMTSGNPVNPLLGAKVLPGETDLALPGPLPFILSRTYSSYRTKTPAPVGVFGPGWKAPSDIRLQLRDDGLILNDNGGRSIHFEPLLPGEAVYSRSESMWLVRGGKAAQPDGHTLARLWGALPPDIRLSPHLYLATNSAQGPWWILGWSERVPGAEDVLPAPLPPYRVLTGMADRFGRTLTYRREAAGDLAGEITGVTDGAGREFRLVLTTQAQRAEEARTSSLSSSDSSRPLSASAFPDTLPGTEYGPDRGIRLSAVWLMHDPAYPESLPAAPLVRYTYTEAGELLAVYDRSNTQVRAFTYDAQHPGRMVAHRYAGRPEMRYRYDDTGRVVEQLNPAGLSYRYLYEQDRITVTDSLNRREVLHTEGGAGLKRVVKKELADGSVTRSGYDAAGRLTAQTDAAGRRTEYGLNVVSGDITDITTPDGRETKFYYNDGNQLTAVVSPDGLESRREYDEPGRLVSETSRSGETVRYRYDDAHSELPATTTDATGSTRQMTWSRYGQLLAFTDCSGYQTRYEYDRFGQMTAVHREEGISLYRRYDNRGRLTSVKDAQGRETRYEYNAAGDLTAVITPDGNRSETQYDAWGKAVSTTQGGLTRSMEYDAAGRVISLTNENGSHSVFSYDALDRLVQQGGFDGRTQRYHYDLTGKLTQSEDEGLVILWYYDESDRITHRTVNGEPAEQWQYDGHGWLTDISHLSEGHRVAVHYGYDDKGRLTGECQTVENPETGELLWQHETKHAYNEQGLANRVTPDSLPPVEWLTYGSGYLAGMKLGGTPLVEYTRDRLHRETVRSFGSMAGSNAAYELTSTYTPAGQLQSQHLNSLVYDRDYGWSDNGDLVRISGPRQTREYGYSATGRLESVRTLAPDLDIRIPYATDPAGNRLPDPELHPDSTLTVWPDNRIAEDAHYVYRHDEYGRLTEKTDRIPAGVIRTDDERTHHYHYDSQHRLVFYTRIQHGEPLVESRYLYDPLGRRMAKRVWRRERDLTGWMSLSRKPEVTWYGWDGDRLTTVQTDTTRIQTVYEPGSFTPLIRVETENGEREKAQRRSLAETLQQEGSENGHGVVFPAELVRLLDRLEEEIRADRVSSESRAWLAQCGLTVEQLARQVEPEYTPARKAHLYHCDHRGLPLALISEDGNTAWSAEYDEWGNQLNEENPHHVYQPYRLPGQQHDEESGLYYNRHRYYDPLQGRYITQDPMGLKGGWNLYQYPLNPLQQIDPMGLLQTWDDARSGACTGGVCGVLSRIIGPSKFDSTADAALDALKETQNRSLCNDMEYSGIVCKDTNGKYFASKAETDNLRKESYPLKRKCPTGTDRVAAYHTHGADSHGDYVDEFFSSSDKNLVRSKDNNLEAFYLATPDGRFEALNNKGEYIFIRNSVPGLSSVCIPYHD.

The segment at 256-285 (AEEARTSSLSSSDSSRPLSASAFPDTLPGT) is disordered. The segment covering 262-277 (SSLSSSDSSRPLSASA) has biased composition (low complexity). Positions 320–1197 (YTEAGELLAV…LNEENPHHVY (878 aa)) are 28 X approximate tandem repeats. Repeat copies occupy residues 334–356 (NTQVRAFTYDAQHPGRMVAHRYA), 357–378 (GRPEMRYRYDDTGRVVEQLNPA), 379–421 (GLSY…ELAD), 422–442 (GSVTRSGYDAAGRLTAQTDAA), 443–464 (GRRTEYGLNVVSGDITDITTPD), 465–485 (GRETKFYYNDGNQLTAVVSPD), 486–506 (GLESRREYDEPGRLVSETSRS), 507–529 (GETVRYRYDDAHSELPATTTDAT), 530–550 (GSTRQMTWSRYGQLLAFTDCS), 551–571 (GYQTRYEYDRFGQMTAVHREE), 572–592 (GISLYRRYDNRGRLTSVKDAQ), 593–613 (GRETRYEYNAAGDLTAVITPD), 614–633 (GNRSETQYDAWGKAVSTTQG), 634–654 (GLTRSMEYDAAGRVISLTNEN), 655–675 (GSHSVFSYDALDRLVQQGGFD), 676–695 (GRTQRYHYDLTGKLTQSEDE), 696–715 (GLVILWYYDESDRITHRTVN), 716–738 (GEPAEQWQYDGHGWLTDISHLSE), 739–762 (GHRVAVHYGYDDKGRLTGECQTVE), 812–832 (GGTPLVEYTRDRLHRETVRSF), 833–861 (GSMAGSNAAYELTSTYTPAGQLQSQHLNS), 862–882 (LVYDRDYGWSDNGDLVRISGP), 883–905 (RQTREYGYSATGRLESVRTLAPD), 906–941 (LDIRIPYATDPAGNRLPDPELHPDSTLTVWPDNRIA), 942–970 (EDAHYVYRHDEYGRLTEKTDRIPAGVIRT), 971–995 (DDERTHHYHYDSQHRLVFYTRIQHG), and 996–1030 (EPLVESRYLYDPLGRRMAKRVWRRERDLTGWMSLS). The segment covering 1073–1085 (ENGEREKAQRRSL) has biased composition (basic and acidic residues). The interval 1073–1097 (ENGEREKAQRRSLAETLQQEGSENG) is disordered. Residues 1173-1197 (GNTAWSAEYDEWGNQLNEENPHHVY) form repeat 28.

It belongs to the RHS family.

In terms of biological role, rhs elements have a nonessential function. They may play an important role in the natural ecology of the cell. The protein is Protein RhsD (rhsD) of Escherichia coli (strain K12).